Here is a 141-residue protein sequence, read N- to C-terminus: Small ribosomal subunit protein uS12 (141 aa).

Residues 118-141 (TGVDKRRQQRSAYGAKRPKADKKK) form a disordered region.

The protein belongs to the universal ribosomal protein uS12 family. Part of the 30S ribosomal subunit. Contacts proteins S8 and S17. May interact with IF1 in the 30S initiation complex.

With S4 and S5 plays an important role in translational accuracy. Its function is as follows. Interacts with and stabilizes bases of the 16S rRNA that are involved in tRNA selection in the A site and with the mRNA backbone. Located at the interface of the 30S and 50S subunits, it traverses the body of the 30S subunit contacting proteins on the other side and probably holding the rRNA structure together. The combined cluster of proteins S8, S12 and S17 appears to hold together the shoulder and platform of the 30S subunit. The polypeptide is Small ribosomal subunit protein uS12 (Mycoplasmoides gallisepticum (strain R(low / passage 15 / clone 2)) (Mycoplasma gallisepticum)).